We begin with the raw amino-acid sequence, 216 residues long: ATP phosphoribosyltransferase (216 aa).

Belongs to the ATP phosphoribosyltransferase family. Short subfamily. As to quaternary structure, heteromultimer composed of HisG and HisZ subunits.

It localises to the cytoplasm. The enzyme catalyses 1-(5-phospho-beta-D-ribosyl)-ATP + diphosphate = 5-phospho-alpha-D-ribose 1-diphosphate + ATP. The protein operates within amino-acid biosynthesis; L-histidine biosynthesis; L-histidine from 5-phospho-alpha-D-ribose 1-diphosphate: step 1/9. In terms of biological role, catalyzes the condensation of ATP and 5-phosphoribose 1-diphosphate to form N'-(5'-phosphoribosyl)-ATP (PR-ATP). Has a crucial role in the pathway because the rate of histidine biosynthesis seems to be controlled primarily by regulation of HisG enzymatic activity. The polypeptide is ATP phosphoribosyltransferase (Thiobacillus denitrificans (strain ATCC 25259 / T1)).